Consider the following 85-residue polypeptide: V-type proton ATPase subunit f (85 aa).

At Met1 to Ala10 the chain is on the lumenal side. Residues Trp11–Phe31 form a helical membrane-spanning segment. At Asn32–Thr54 the chain is on the cytoplasmic side. The chain crosses the membrane as a helical span at residues Val55–Leu75. Residues Ala76–Arg85 lie on the Lumenal side of the membrane.

As to quaternary structure, V-ATPase is a heteromultimeric enzyme composed of a peripheral catalytic V1 complex (components A to H) attached to an integral membrane V0 proton pore complex (components: a, c, c', c'', d, e, f and VOA1).

Its subcellular location is the endoplasmic reticulum membrane. The protein localises to the vacuole membrane. In terms of biological role, accessory component of the V0 complex of vacuolar(H+)-ATPase (V-ATPase), a multisubunit enzyme composed of a peripheral complex (V1) that hydrolyzes ATP and a membrane integral complex (V0) that translocates protons. V-ATPase is responsible for acidifying and maintaining the pH of intracellular compartments. The chain is V-type proton ATPase subunit f from Saccharomyces cerevisiae (strain ATCC 204508 / S288c) (Baker's yeast).